Consider the following 423-residue polypeptide: Gamma-glutamyl phosphate reductase (423 aa).

The protein belongs to the gamma-glutamyl phosphate reductase family.

The protein resides in the cytoplasm. It catalyses the reaction L-glutamate 5-semialdehyde + phosphate + NADP(+) = L-glutamyl 5-phosphate + NADPH + H(+). Its pathway is amino-acid biosynthesis; L-proline biosynthesis; L-glutamate 5-semialdehyde from L-glutamate: step 2/2. Its function is as follows. Catalyzes the NADPH-dependent reduction of L-glutamate 5-phosphate into L-glutamate 5-semialdehyde and phosphate. The product spontaneously undergoes cyclization to form 1-pyrroline-5-carboxylate. The polypeptide is Gamma-glutamyl phosphate reductase (Burkholderia orbicola (strain AU 1054)).